A 648-amino-acid chain; its full sequence is Phosphatidylinositol-3,5-bisphosphate 3-phosphatase MTMR14 (648 aa).

Residues 1 to 19 (MAGARAAAAASAGSTASSG) are compositionally biased toward low complexity. The tract at residues 1–27 (MAGARAAAAASAGSTASSGSPPPQEPG) is disordered. N6-acetyllysine is present on lysine 193. N-linked (GlcNAc...) asparagine glycosylation is found at asparagine 225 and asparagine 240. The active-site Phosphocysteine intermediate is cysteine 329. Positions 332, 333, 334, 335, and 381 each coordinate a 1,2-diacyl-sn-glycero-3-phospho-(1D-myo-inositol-3,5-bisphosphate). 5 residues coordinate a 1,2-diacyl-sn-glycero-3-phospho-(1D-myo-inositol-3-phosphate): glycine 332, tryptophan 333, aspartate 334, arginine 335, and arginine 381. The interval 471–544 (PTQAAWRKSH…PRSVDHPLPG (74 aa)) is disordered. A compositionally biased stretch (basic and acidic residues) spans 494–506 (PSEERLPSHHGLT). Serine 516 bears the Phosphoserine mark. N-linked (GlcNAc...) asparagine glycosylation occurs at asparagine 517. Serine 528, serine 578, and serine 622 each carry phosphoserine. Residue arginine 636 is modified to Omega-N-methylarginine.

It belongs to the protein-tyrosine phosphatase family. Non-receptor class myotubularin subfamily.

Its subcellular location is the cytoplasm. It carries out the reaction a 1,2-diacyl-sn-glycero-3-phospho-(1D-myo-inositol-3,5-bisphosphate) + H2O = a 1,2-diacyl-sn-glycero-3-phospho-(1D-myo-inositol-5-phosphate) + phosphate. The enzyme catalyses a 1,2-diacyl-sn-glycero-3-phospho-(1D-myo-inositol-3-phosphate) + H2O = a 1,2-diacyl-sn-glycero-3-phospho-(1D-myo-inositol) + phosphate. Its function is as follows. Lipid phosphatase that specifically dephosphorylates the D-3 position of phosphatidylinositol 3-phosphate and phosphatidylinositol 3,5-bisphosphate, generating phosphatidylinositol and phosphatidylinositol 5-phosphate. The protein is Phosphatidylinositol-3,5-bisphosphate 3-phosphatase MTMR14 of Mus musculus (Mouse).